The following is a 266-amino-acid chain: Translation initiation factor 2 subunit alpha (266 aa).

An S1 motif domain is found at 12–83 (GEILIATVKQ…RKGTVDVSLK (72 aa)).

It belongs to the eIF-2-alpha family. In terms of assembly, heterotrimer composed of an alpha, a beta and a gamma chain.

In terms of biological role, eIF-2 functions in the early steps of protein synthesis by forming a ternary complex with GTP and initiator tRNA. This Saccharolobus islandicus (strain L.S.2.15 / Lassen #1) (Sulfolobus islandicus) protein is Translation initiation factor 2 subunit alpha.